Consider the following 206-residue polypeptide: Small ribosomal subunit protein uS4 (206 aa).

Residues 23-47 (AKSPLNRREYGPGQHGQRRKGKLSD) form a disordered region. In terms of domain architecture, S4 RNA-binding spans 94 to 157 (RRLDAVIYRA…RQLAIVLESV (64 aa)).

The protein belongs to the universal ribosomal protein uS4 family. Part of the 30S ribosomal subunit. Contacts protein S5. The interaction surface between S4 and S5 is involved in control of translational fidelity.

One of the primary rRNA binding proteins, it binds directly to 16S rRNA where it nucleates assembly of the body of the 30S subunit. In terms of biological role, with S5 and S12 plays an important role in translational accuracy. The protein is Small ribosomal subunit protein uS4 of Paracoccus denitrificans (strain Pd 1222).